The following is an 87-amino-acid chain: Large ribosomal subunit protein bL27 (87 aa).

Belongs to the bacterial ribosomal protein bL27 family.

The sequence is that of Large ribosomal subunit protein bL27 from Wigglesworthia glossinidia brevipalpis.